The chain runs to 469 residues: GDP-fucose protein O-fucosyltransferase 2 (469 aa).

An N-terminal signal peptide occupies residues 1-18; it reads MKFIIVLLLFFFFKVIDR. Residues 56-60, 277-279, and 373-374 contribute to the GDP-beta-L-fucose site; these read GEGFN, HLR, and RF. Glu-57 acts as the Proton acceptor in catalysis.

The protein belongs to the glycosyltransferase 68 family.

The protein localises to the endoplasmic reticulum. It catalyses the reaction L-seryl-[protein] + GDP-beta-L-fucose = 3-O-(alpha-L-fucosyl)-L-seryl-[protein] + GDP + H(+). It carries out the reaction L-threonyl-[protein] + GDP-beta-L-fucose = 3-O-(alpha-L-fucosyl)-L-threonyl-[protein] + GDP + H(+). The protein operates within protein modification; protein glycosylation. Its function is as follows. Catalyzes the reaction that attaches fucose through an O-glycosidic linkage to a conserved serine or threonine residue in the consensus sequence C1-X-X-S/T-C2 of thrombospondin type I repeats (TSRs) where C1 and C2 are the first and second cysteines of the repeat, respectively. O-fucosylates sporozoite proteins CSP and TRAP. O-fucosylation regulates stability and intracellular trafficking of TRAP but not of CSP. Probably by regulating protein O-fucosylation, may play a role in parasite transmission to the mosquito vector and/or infection of the vertebrate host hepatocytes; however, POFUT2 involvement in transmission/infection is controversial. This is GDP-fucose protein O-fucosyltransferase 2 from Plasmodium falciparum (isolate NF54).